The sequence spans 519 residues: MTQPLMTMRGIVKTFSGVKALDGIDLTIAPGECVGLCGENGAGKSTLMKVLSGVYPWGTWDGEIIWEGAPLKAASVRDTERAGIIIIHQELMLVPELSVAENIFLGNEITLPGGRMNYAAMYQRADELLRELGISGINAAQPVMNYGGGHQQLIEIAKALNKRAKLLILDEPSSSLTASEISILLDIVRDLKRRGVACVYISHKLDEVAAVCDTISVIRDGRHVATEPMRALTTDRIISLMVGREIKNLFPREPHPIGDVIFEARHVTCFDVTNPRRKRVNDVSFALRRGEILGVAGLVGAGRTELMQAIFGAYPGVSEATVVMEGKPLKIRAPVDAIRAGIGMVPEDRKRHGIVPGLSVGHNITLAVLGRFASAGRIDSAAELDTIHTEMKRLSVRAAHPMLSIASLSGGNQQKAVLTRMLLTNPKVLILDEPTRGVDVGAKYEIYKLIFQLAQRGMSIVMVSSELPEVLGISDRVLVIGEGELRGDFVNDGLTQEDILSAAIRPVQRSPNPTVASAA.

ABC transporter domains are found at residues 6–245 (MTMR…VGRE) and 262–507 (FEAR…IRPV). An ATP-binding site is contributed by 38–45 (GENGAGKS).

This sequence belongs to the ABC transporter superfamily. Xylose importer (TC 3.A.1.2.4) family. As to quaternary structure, the complex is composed of two ATP-binding proteins (XylG), two transmembrane proteins (XylH) and a solute-binding protein (XylF).

The protein resides in the cell inner membrane. The enzyme catalyses D-xylose(out) + ATP + H2O = D-xylose(in) + ADP + phosphate + H(+). Its function is as follows. Part of the ABC transporter complex XylFGH involved in xylose import. Responsible for energy coupling to the transport system. The chain is Xylose import ATP-binding protein XylG from Paraburkholderia xenovorans (strain LB400).